Consider the following 157-residue polypeptide: Probable Brix domain-containing ribosomal biogenesis protein (157 aa).

The Brix domain maps to 1–157 (MLVTSSRKPS…KLNLRGFKKY (157 aa)).

Its function is as follows. Probably involved in the biogenesis of the ribosome. The protein is Probable Brix domain-containing ribosomal biogenesis protein of Methanosarcina barkeri (strain Fusaro / DSM 804).